A 314-amino-acid polypeptide reads, in one-letter code: MEFSMNATVEQLAPVEQQATTDWVVAALYQFKEVADAADLQQRLLDLVKTINLCGTLIVASEGINGTVAGDRHAIDTIREFLLNEGFHAMEYKESHSAEKPFRKMKIKLKQEIVTLGVEVKPRDLVGHYLDPKEWNELISRDDVILVDTRNDYEYKAGTFKGAIDPKTETFREFPDYVKQNLEQHKDKKIAMFCTGGIRCEKSTSLLLQEGFNEVYHLKGGILKYLEETPAEESLWEGECFVFDGRTAVTHGVEEGQNVKCHACGWPLTPEEVALPSYEHGVSCVYCIEKTTEKQKEGFRMRQSQIAAAKRKRL.

Residues serine 140 to serine 234 enclose the Rhodanese domain. Cysteine 194 (cysteine persulfide intermediate) is an active-site residue.

Belongs to the TrhO family.

The enzyme catalyses uridine(34) in tRNA + AH2 + O2 = 5-hydroxyuridine(34) in tRNA + A + H2O. In terms of biological role, catalyzes oxygen-dependent 5-hydroxyuridine (ho5U) modification at position 34 in tRNAs. The sequence is that of tRNA uridine(34) hydroxylase from Acinetobacter baylyi (strain ATCC 33305 / BD413 / ADP1).